The following is an 80-amino-acid chain: uncharacterized protein (80 aa).

This is an uncharacterized protein from Invertebrate iridescent virus 6 (IIV-6).